A 186-amino-acid polypeptide reads, in one-letter code: Ribosome-recycling factor (186 aa).

The protein belongs to the RRF family.

The protein resides in the cytoplasm. Responsible for the release of ribosomes from messenger RNA at the termination of protein biosynthesis. May increase the efficiency of translation by recycling ribosomes from one round of translation to another. This Rickettsia felis (strain ATCC VR-1525 / URRWXCal2) (Rickettsia azadi) protein is Ribosome-recycling factor.